The primary structure comprises 407 residues: Acetate kinase (407 aa).

A Mg(2+)-binding site is contributed by Asn-10. Lys-17 is an ATP binding site. Arg-91 is a substrate binding site. Asp-150 functions as the Proton donor/acceptor in the catalytic mechanism. ATP contacts are provided by residues 210–214, 285–287, and 338–342; these read HLGNG, DCR, and GIGEN. Position 392 (Glu-392) interacts with Mg(2+).

It belongs to the acetokinase family. As to quaternary structure, homodimer. It depends on Mg(2+) as a cofactor. Mn(2+) is required as a cofactor.

It is found in the cytoplasm. The catalysed reaction is acetate + ATP = acetyl phosphate + ADP. Its pathway is metabolic intermediate biosynthesis; acetyl-CoA biosynthesis; acetyl-CoA from acetate: step 1/2. Its function is as follows. Catalyzes the formation of acetyl phosphate from acetate and ATP. Can also catalyze the reverse reaction. The sequence is that of Acetate kinase from Mannheimia succiniciproducens (strain KCTC 0769BP / MBEL55E).